Reading from the N-terminus, the 139-residue chain is FAD synthase (139 aa).

ATP contacts are provided by residues 8–9, 13–16, Asp92, and Tyr119; these read VF and HPGH.

This sequence belongs to the archaeal FAD synthase family. Homodimer. It depends on a divalent metal cation as a cofactor.

It carries out the reaction FMN + ATP + H(+) = FAD + diphosphate. Its pathway is cofactor biosynthesis; FAD biosynthesis; FAD from FMN: step 1/1. Functionally, catalyzes the transfer of the AMP portion of ATP to flavin mononucleotide (FMN) to produce flavin adenine dinucleotide (FAD) coenzyme. The protein is FAD synthase of Picrophilus torridus (strain ATCC 700027 / DSM 9790 / JCM 10055 / NBRC 100828 / KAW 2/3).